The chain runs to 129 residues: KVFSKCELAHKLKAQEMDGFGGYSLANWVCMAEYESNFNTRAFNGKNANGSYDYGLFQLNSKWWCKDNKRSSSNACNIMCSKLLDDNIDDDISCAKRVVRDPKGMSAWKAWVKHCKDKDLSEYLASCNL.

Residues 1 to 129 (KVFSKCELAH…LSEYLASCNL (129 aa)) form the C-type lysozyme domain. 4 disulfides stabilise this stretch: C6-C127, C30-C115, C65-C80, and C76-C94. Active-site residues include E35 and D53. Ca(2+)-binding residues include K82, D85, N87, D90, and D91.

It belongs to the glycosyl hydrolase 22 family. Monomer. Ca(2+) is required as a cofactor.

The enzyme catalyses Hydrolysis of (1-&gt;4)-beta-linkages between N-acetylmuramic acid and N-acetyl-D-glucosamine residues in a peptidoglycan and between N-acetyl-D-glucosamine residues in chitodextrins.. Lysozymes have primarily a bacteriolytic function; those in tissues and body fluids are associated with the monocyte-macrophage system and enhance the activity of immunoagents. The sequence is that of Lysozyme C (LYZ) from Equus asinus (Donkey).